We begin with the raw amino-acid sequence, 59 residues long: MDHRLLEIVACPVCKGKLNYDKEKNELICKFDRLAYPIQDGIPVLIEPEARTLSSDEVK.

Belongs to the UPF0434 family.

The sequence is that of UPF0434 protein PBPRA2383 from Photobacterium profundum (strain SS9).